A 621-amino-acid chain; its full sequence is UvrABC system protein C (621 aa).

The region spanning 13–92 (NEPGVYLMKN…IKKYSPKYNI (80 aa)) is the GIY-YIG domain. One can recognise a UVR domain in the interval 204-239 (RSLLNKLKEEMQSASGNLEFEKAASLRDKMIAIENI).

The protein belongs to the UvrC family. As to quaternary structure, interacts with UvrB in an incision complex.

It localises to the cytoplasm. Functionally, the UvrABC repair system catalyzes the recognition and processing of DNA lesions. UvrC both incises the 5' and 3' sides of the lesion. The N-terminal half is responsible for the 3' incision and the C-terminal half is responsible for the 5' incision. The polypeptide is UvrABC system protein C (Clostridium beijerinckii (strain ATCC 51743 / NCIMB 8052) (Clostridium acetobutylicum)).